A 451-amino-acid polypeptide reads, in one-letter code: UDP-N-acetylmuramoylalanine--D-glutamate ligase (451 aa).

Position 116-122 (Gly-116–Thr-122) interacts with ATP.

This sequence belongs to the MurCDEF family.

The protein localises to the cytoplasm. It catalyses the reaction UDP-N-acetyl-alpha-D-muramoyl-L-alanine + D-glutamate + ATP = UDP-N-acetyl-alpha-D-muramoyl-L-alanyl-D-glutamate + ADP + phosphate + H(+). Its pathway is cell wall biogenesis; peptidoglycan biosynthesis. In terms of biological role, cell wall formation. Catalyzes the addition of glutamate to the nucleotide precursor UDP-N-acetylmuramoyl-L-alanine (UMA). The protein is UDP-N-acetylmuramoylalanine--D-glutamate ligase of Clostridioides difficile (strain 630) (Peptoclostridium difficile).